The sequence spans 111 residues: T cell receptor beta variable 30 (111 aa).

An N-terminal signal peptide occupies residues 1–18 (MLCSLLALLLGTFFGVRS). Residues 19–111 (QTIHQWPATL…DSGFYLCAWS (93 aa)) form the Ig-like domain. A disulfide bridge connects residues Cys-40 and Cys-108. N-linked (GlcNAc...) asparagine glycosylation is present at Asn-80.

In terms of assembly, alpha-beta TR is a heterodimer composed of an alpha and beta chain; disulfide-linked. The alpha-beta TR is associated with the transmembrane signaling CD3 coreceptor proteins to form the TR-CD3 (TcR or TCR). The assembly of alpha-beta TR heterodimers with CD3 occurs in the endoplasmic reticulum where a single alpha-beta TR heterodimer associates with one CD3D-CD3E heterodimer, one CD3G-CD3E heterodimer and one CD247 homodimer forming a stable octameric structure. CD3D-CD3E and CD3G-CD3E heterodimers preferentially associate with TR alpha and TR beta chains, respectively. The association of the CD247 homodimer is the last step of TcR assembly in the endoplasmic reticulum and is required for transport to the cell surface.

Its subcellular location is the cell membrane. Functionally, v region of the variable domain of T cell receptor (TR) beta chain that participates in the antigen recognition. Alpha-beta T cell receptors are antigen specific receptors which are essential to the immune response and are present on the cell surface of T lymphocytes. Recognize peptide-major histocompatibility (MH) (pMH) complexes that are displayed by antigen presenting cells (APC), a prerequisite for efficient T cell adaptive immunity against pathogens. Binding of alpha-beta TR to pMH complex initiates TR-CD3 clustering on the cell surface and intracellular activation of LCK that phosphorylates the ITAM motifs of CD3G, CD3D, CD3E and CD247 enabling the recruitment of ZAP70. In turn ZAP70 phosphorylates LAT, which recruits numerous signaling molecules to form the LAT signalosome. The LAT signalosome propagates signal branching to three major signaling pathways, the calcium, the mitogen-activated protein kinase (MAPK) kinase and the nuclear factor NF-kappa-B (NF-kB) pathways, leading to the mobilization of transcription factors that are critical for gene expression and essential for T cell growth and differentiation. The T cell repertoire is generated in the thymus, by V-(D)-J rearrangement. This repertoire is then shaped by intrathymic selection events to generate a peripheral T cell pool of self-MH restricted, non-autoaggressive T cells. Post-thymic interaction of alpha-beta TR with the pMH complexes shapes TR structural and functional avidity. The chain is T cell receptor beta variable 30 from Homo sapiens (Human).